Reading from the N-terminus, the 433-residue chain is Probable phosphoglucosamine mutase (433 aa).

Ser91 (phosphoserine intermediate) is an active-site residue. Mg(2+) is bound by residues Ser91, Asp229, Asp231, and Asp233. Ser91 is modified (phosphoserine).

The protein belongs to the phosphohexose mutase family. Mg(2+) serves as cofactor. Activated by phosphorylation.

The catalysed reaction is alpha-D-glucosamine 1-phosphate = D-glucosamine 6-phosphate. Functionally, catalyzes the conversion of glucosamine-6-phosphate to glucosamine-1-phosphate. The polypeptide is Probable phosphoglucosamine mutase (Methanococcoides burtonii (strain DSM 6242 / NBRC 107633 / OCM 468 / ACE-M)).